The following is a 279-amino-acid chain: NADPH-dependent 7-cyano-7-deazaguanine reductase (279 aa).

86-88 (IES) contributes to the substrate binding site. Residue 88–89 (SK) participates in NADPH binding. Residue Cys-187 is the Thioimide intermediate of the active site. Catalysis depends on Asp-194, which acts as the Proton donor. 226–227 (HE) is a binding site for substrate. 255-256 (RG) is a binding site for NADPH.

This sequence belongs to the GTP cyclohydrolase I family. QueF type 2 subfamily. Homodimer.

The protein localises to the cytoplasm. It carries out the reaction 7-aminomethyl-7-carbaguanine + 2 NADP(+) = 7-cyano-7-deazaguanine + 2 NADPH + 3 H(+). Its pathway is tRNA modification; tRNA-queuosine biosynthesis. Its function is as follows. Catalyzes the NADPH-dependent reduction of 7-cyano-7-deazaguanine (preQ0) to 7-aminomethyl-7-deazaguanine (preQ1). The polypeptide is NADPH-dependent 7-cyano-7-deazaguanine reductase (Haemophilus ducreyi (strain 35000HP / ATCC 700724)).